Reading from the N-terminus, the 79-residue chain is U-actitoxin-Avd9d (79 aa).

An N-terminal signal peptide occupies residues 1 to 19 (NLKVLAVFVLCAILVVVTA). Positions 20–37 (ERRGTETGGYKKDTLEDL) are excised as a propeptide. Positions 44–79 (CFDSFKEATCHMAKTNRLCKTSAKYQINCKKTCGLC) constitute a ShKT domain. 3 disulfide bridges follow: Cys44-Cys79, Cys53-Cys72, and Cys62-Cys76. Positions 67–68 (KY) are crucial for binding to potassium channels.

Belongs to the sea anemone type 1 potassium channel toxin family. Type 1b subfamily.

The protein localises to the secreted. It localises to the nematocyst. Its function is as follows. Inhibits voltage-gated potassium channels (Kv1/KCNA). This chain is U-actitoxin-Avd9d, found in Anemonia viridis (Snakelocks anemone).